The chain runs to 231 residues: Large ribosomal subunit protein uL1 (231 aa).

It belongs to the universal ribosomal protein uL1 family. Part of the 50S ribosomal subunit.

In terms of biological role, binds directly to 23S rRNA. The L1 stalk is quite mobile in the ribosome, and is involved in E site tRNA release. Protein L1 is also a translational repressor protein, it controls the translation of the L11 operon by binding to its mRNA. This is Large ribosomal subunit protein uL1 from Lactobacillus delbrueckii subsp. bulgaricus (strain ATCC 11842 / DSM 20081 / BCRC 10696 / JCM 1002 / NBRC 13953 / NCIMB 11778 / NCTC 12712 / WDCM 00102 / Lb 14).